A 400-amino-acid polypeptide reads, in one-letter code: Cartilage-associated protein (400 aa).

Positions 1-25 are cleaved as a signal peptide; the sequence is MGPRSPTAALLVLLCVGCAPTPGRG. Residues asparagine 86 and asparagine 362 are each glycosylated (N-linked (GlcNAc...) asparagine).

Belongs to the leprecan family. Found in articular chondrocytes. Expressed in a variety of tissues.

It localises to the secreted. The protein localises to the extracellular space. The protein resides in the extracellular matrix. In terms of biological role, necessary for efficient 3-hydroxylation of fibrillar collagen prolyl residues. In Mus musculus (Mouse), this protein is Cartilage-associated protein (Crtap).